Consider the following 446-residue polypeptide: MPKRTFTKEDIRKFAEEENVRYLRLQFTDILGTIKNVEVPVSQLEKVLDNEMMFDGSSIEGFVRIEESDMYLHPDLDTWVIFPWTAGQGKVARLICDVYKTDGTPFEGDPRANLKRVLKEMEDLGFTDFNLGPEPEFFLFKLDEKGEPTLELNDDGGYFDLAPTDLGENCRRDIVLELEDMGFDIEASHHEVAPGQHEIDFKYADAVTACDNIQTFKLVVKTIARKHNLHATFMPKPLFGVNGSGMHFNVSLFKGKENAFFDPNTEMGLTETAYQFTAGVLKNARGFTAVCNPLVNSYKRLVPGYEAPCYIAWSGKNRSPLIRVPSSRGLSTRIEVRSVDPAANPYMALAAILEAGLDGIKNKLKVPEPVNQNIYEMNREEREAVGIQDLPSTLYTALKAMRENEVIKKALGNHIYNQFINSKSIEWDYYRTQVSEWERDQYMKQY.

The 86-residue stretch at 18-103 folds into the GS beta-grasp domain; it reads ENVRYLRLQF…LICDVYKTDG (86 aa). Residues 110–446 enclose the GS catalytic domain; it reads PRANLKRVLK…WERDQYMKQY (337 aa). Residues glutamate 134 and glutamate 136 each contribute to the Mg(2+) site. Residue glutamate 186 participates in ATP binding. Residues glutamate 191 and glutamate 198 each coordinate Mg(2+). L-glutamate is bound by residues 242–243 and glycine 243; that span reads NG. Histidine 247 serves as a coordination point for Mg(2+). Serine 251 lines the ATP pocket. Arginine 300, glutamate 306, and arginine 318 together coordinate L-glutamate. 2 residues coordinate ATP: arginine 318 and arginine 323. Glutamate 335 contributes to the Mg(2+) binding site. L-glutamate is bound at residue arginine 337.

Belongs to the glutamine synthetase family. Oligomer of 12 subunits arranged in the form of two hexagons. In its feedback-inhibited form, interacts with TnrA in order to block its DNA-binding activity. Mg(2+) serves as cofactor.

Its subcellular location is the cytoplasm. It carries out the reaction L-glutamate + NH4(+) + ATP = L-glutamine + ADP + phosphate + H(+). Its activity is regulated as follows. Inhibited by glutamine. Functionally, glutamine synthetase (GS) is an unusual multitasking protein that functions as an enzyme, a transcription coregulator, and a chaperone in ammonium assimilation and in the regulation of genes involved in nitrogen metabolism. It catalyzes the ATP-dependent biosynthesis of glutamine from glutamate and ammonia. Feedback-inhibited GlnA also interacts with and regulates the activity of the transcriptional regulator TnrA. During nitrogen limitation, TnrA is in its DNA-binding active state and turns on the transcription of genes required for nitrogen assimilation. Under conditions of nitrogen excess, feedback-inhibited GlnA forms a stable complex with TnrA, which inhibits its DNA-binding activity. In contrast, feedback-inhibited GlnA acts as a chaperone to stabilize the DNA-binding activity of GlnR, which represses the transcription of nitrogen assimilation genes. The sequence is that of Glutamine synthetase from Staphylococcus aureus (strain N315).